A 546-amino-acid chain; its full sequence is ATP-dependent rRNA helicase RRP3 (546 aa).

The interval 1 to 108 (MSDFKRRKLE…DEEAEAQAAA (108 aa)) is disordered. 2 stretches are compositionally biased toward acidic residues: residues 60–77 (SEED…EEED) and 94–103 (EAEQSDEEAE). A Q motif motif is present at residues 115-143 (KTFADLGVREELCDACENLGYKTATPIQT). Residues 146-318 (IPLALAGKDI…RAALKNPVRV (173 aa)) form the Helicase ATP-binding domain. 159-166 (AETGSGKT) contacts ATP. The short motif at 265-268 (DEAD) is the DEAD box element. Positions 342 to 490 (YKDLYLIHLL…EEKVSRDEVM (149 aa)) constitute a Helicase C-terminal domain. The segment covering 504–515 (VREMKDLHDQRK) has biased composition (basic and acidic residues). The interval 504-546 (VREMKDLHDQRKSGRGGRGGGRGGGRGGRGRGGRRDNMDMDEG) is disordered. Over residues 519 to 530 (GGRGGGRGGGRG) the composition is skewed to gly residues. A compositionally biased stretch (basic and acidic residues) spans 536–546 (GRRDNMDMDEG).

It belongs to the DEAD box helicase family. DDX47/RRP3 subfamily. As to quaternary structure, interacts with the SSU processome.

It localises to the nucleus. The enzyme catalyses ATP + H2O = ADP + phosphate + H(+). ATP-dependent rRNA helicase required for pre-ribosomal RNA processing. Involved in the maturation of the 35S-pre-rRNA and to its cleavage to mature 18S rRNA. The sequence is that of ATP-dependent rRNA helicase RRP3 from Phaeosphaeria nodorum (strain SN15 / ATCC MYA-4574 / FGSC 10173) (Glume blotch fungus).